The primary structure comprises 605 residues: Replication protein E1 (605 aa).

Residues 76 to 78 (KRK) carry the Nuclear localization signal motif. Phosphoserine; by host is present on residues S81 and S89. Residues 88 to 97 (LSPRLESISL) carry the Nuclear export signal motif. Residues 145-308 (HLGTVDIHYT…TIVGHQSTEA (164 aa)) form a DNA-binding region region. An SF3 helicase domain is found at 407-557 (VNVIMFLAAL…FPMKPDNTPE (151 aa)). 433 to 440 (GPPNTGKS) is a binding site for ATP. K514 is covalently cross-linked (Glycyl lysine isopeptide (Lys-Gly) (interchain with G-Cter in SUMO)). The interval 580 to 605 (DQEDEGENGESQQAFQCSARSANEHL) is disordered. The segment covering 588-605 (GESQQAFQCSARSANEHL) has biased composition (polar residues).

Belongs to the papillomaviridae E1 protein family. Can form hexamers. Interacts with E2 protein; this interaction increases E1 DNA binding specificity. Interacts with host DNA polymerase subunit POLA2. Interacts with host single stranded DNA-binding protein RPA1. Interacts with host TOP1; this interaction stimulates the enzymatic activity of TOP1. In terms of processing, phosphorylated. Sumoylated.

The protein localises to the host nucleus. It carries out the reaction Couples ATP hydrolysis with the unwinding of duplex DNA by translocating in the 3'-5' direction.. The catalysed reaction is ATP + H2O = ADP + phosphate + H(+). Functionally, ATP-dependent DNA 3'-5' helicase required for initiation of viral DNA replication. It forms a complex with the viral E2 protein. The E1-E2 complex binds to the replication origin which contains binding sites for both proteins. During the initial step, a dimer of E1 interacts with a dimer of protein E2 leading to a complex that binds the viral origin of replication with high specificity. Then, a second dimer of E1 displaces the E2 dimer in an ATP-dependent manner to form the E1 tetramer. Following this, two E1 monomers are added to each half of the site, which results in the formation of two E1 trimers on the viral ori. Subsequently, two hexamers will be created. The double hexamer acts as a bi-directional helicase machinery and unwinds the viral DNA and then recruits the host DNA polymerase to start replication. This Homo sapiens (Human) protein is Replication protein E1.